Reading from the N-terminus, the 936-residue chain is General transcription factor II-I repeat domain-containing protein 2 (936 aa).

One copy of the GTF2I-like 1 repeat lies at 95-189 (EACPGEAQLL…FLGAESQLGG (95 aa)). Positions 199 to 222 (PTVPPNDSYGPVSVKTEPMEDSGT) are disordered. Residues 319–413 (LSGLEKIKQL…LPGLELSNVG (95 aa)) form a GTF2I-like 2 repeat.

It belongs to the TFII-I family. In terms of tissue distribution, ubiquitous.

The protein resides in the nucleus. The chain is General transcription factor II-I repeat domain-containing protein 2 (Gtf2ird2) from Mus musculus (Mouse).